Consider the following 134-residue polypeptide: Small ribosomal subunit protein uS8c (134 aa).

This sequence belongs to the universal ribosomal protein uS8 family. As to quaternary structure, part of the 30S ribosomal subunit.

The protein localises to the plastid. In terms of biological role, one of the primary rRNA binding proteins, it binds directly to 16S rRNA central domain where it helps coordinate assembly of the platform of the 30S subunit. The sequence is that of Small ribosomal subunit protein uS8c (rps8) from Cuscuta gronovii (Common dodder).